A 375-amino-acid polypeptide reads, in one-letter code: Tryptophan dimethylallyltransferase (375 aa).

Residues 83–84 (IL) and Glu92 contribute to the L-tryptophan site. 3 residues coordinate substrate: Arg103, Lys189, and Tyr191. 2 residues coordinate L-tryptophan: Tyr193 and Arg246. Substrate contacts are provided by Arg259, Lys261, Tyr263, Gln345, and Tyr347.

It belongs to the tryptophan dimethylallyltransferase family. In terms of assembly, homodimer.

The catalysed reaction is L-tryptophan + dimethylallyl diphosphate = 4-(3-methylbut-2-enyl)-L-tryptophan + diphosphate. The protein operates within alkaloid biosynthesis; ergot alkaloid biosynthesis. Its function is as follows. Tryptophan dimethylallyltransferase; part of the gene cluster that mediates the biosynthesis of fungal ergot alkaloid. DmaW catalyzes the first step of ergot alkaloid biosynthesis by condensing dimethylallyl diphosphate (DMAP) and tryptophan to form 4-dimethylallyl-L-tryptophan. The second step is catalyzed by the methyltransferase easF that methylates 4-dimethylallyl-L-tryptophan in the presence of S-adenosyl-L-methionine, resulting in the formation of 4-dimethylallyl-L-abrine. The catalase easC and the FAD-dependent oxidoreductase easE then transform 4-dimethylallyl-L-abrine to chanoclavine-I which is further oxidized by easD in the presence of NAD(+), resulting in the formation of chanoclavine-I aldehyde. Chanoclavine-I aldehyde is the precursor of ergoamides and ergopeptines in Clavicipitaceae, and clavine-type alcaloids such as fumiclavine in Trichocomaceae. However, the metabolites downstream of chanoclavine-I aldehyde in Arthrodermataceae have not been identified yet. The protein is Tryptophan dimethylallyltransferase of Trichophyton verrucosum (strain HKI 0517).